Consider the following 407-residue polypeptide: Cytochrome P450-pinF2, plant-inducible (407 aa).

Cys356 contributes to the heme binding site.

Belongs to the cytochrome P450 family. Heme is required as a cofactor.

Its function is as follows. Not essential for virulence, but may be involved in the detoxification of plant protective agents at the site of wounding. This chain is Cytochrome P450-pinF2, plant-inducible (cyp104), found in Rhizobium radiobacter (Agrobacterium tumefaciens).